The chain runs to 398 residues: Succinate--CoA ligase [ADP-forming] subunit beta (398 aa).

Residues 9–254 (KALLKSFGAP…KTEEDAKEIE (246 aa)) form the ATP-grasp domain. ATP contacts are provided by residues K46, 53–55 (GRG), E109, A112, and E117. Mg(2+) contacts are provided by N209 and D223. Substrate contacts are provided by residues N274 and 331-333 (GIM).

This sequence belongs to the succinate/malate CoA ligase beta subunit family. As to quaternary structure, heterotetramer of two alpha and two beta subunits. Mg(2+) serves as cofactor.

It carries out the reaction succinate + ATP + CoA = succinyl-CoA + ADP + phosphate. The catalysed reaction is GTP + succinate + CoA = succinyl-CoA + GDP + phosphate. It participates in carbohydrate metabolism; tricarboxylic acid cycle; succinate from succinyl-CoA (ligase route): step 1/1. Succinyl-CoA synthetase functions in the citric acid cycle (TCA), coupling the hydrolysis of succinyl-CoA to the synthesis of either ATP or GTP and thus represents the only step of substrate-level phosphorylation in the TCA. The beta subunit provides nucleotide specificity of the enzyme and binds the substrate succinate, while the binding sites for coenzyme A and phosphate are found in the alpha subunit. This is Succinate--CoA ligase [ADP-forming] subunit beta from Allorhizobium ampelinum (strain ATCC BAA-846 / DSM 112012 / S4) (Agrobacterium vitis (strain S4)).